The following is a 172-amino-acid chain: NADH-quinone oxidoreductase subunit B (172 aa).

Residues Cys42, Cys43, Cys107, and Cys136 each contribute to the [4Fe-4S] cluster site.

It belongs to the complex I 20 kDa subunit family. NDH-1 is composed of 14 different subunits. Subunits NuoB, C, D, E, F, and G constitute the peripheral sector of the complex. [4Fe-4S] cluster is required as a cofactor.

It is found in the cell inner membrane. The catalysed reaction is a quinone + NADH + 5 H(+)(in) = a quinol + NAD(+) + 4 H(+)(out). Functionally, NDH-1 shuttles electrons from NADH, via FMN and iron-sulfur (Fe-S) centers, to quinones in the respiratory chain. The immediate electron acceptor for the enzyme in this species is believed to be ubiquinone. Couples the redox reaction to proton translocation (for every two electrons transferred, four hydrogen ions are translocated across the cytoplasmic membrane), and thus conserves the redox energy in a proton gradient. This is NADH-quinone oxidoreductase subunit B from Sulfurovum sp. (strain NBC37-1).